The following is a 599-amino-acid chain: 2-succinyl-5-enolpyruvyl-6-hydroxy-3-cyclohexene-1-carboxylate synthase (599 aa).

Residues 1-21 (MTSENPLDPNNAYAAADDAPL) are compositionally biased toward low complexity. The segment at 1–35 (MTSENPLDPNNAYAAADDAPLSEGDPTGAPADSGS) is disordered.

This sequence belongs to the TPP enzyme family. MenD subfamily. In terms of assembly, homodimer. Mg(2+) serves as cofactor. Requires Mn(2+) as cofactor. It depends on thiamine diphosphate as a cofactor.

The enzyme catalyses isochorismate + 2-oxoglutarate + H(+) = 5-enolpyruvoyl-6-hydroxy-2-succinyl-cyclohex-3-ene-1-carboxylate + CO2. It participates in quinol/quinone metabolism; 1,4-dihydroxy-2-naphthoate biosynthesis; 1,4-dihydroxy-2-naphthoate from chorismate: step 2/7. The protein operates within quinol/quinone metabolism; menaquinone biosynthesis. In terms of biological role, catalyzes the thiamine diphosphate-dependent decarboxylation of 2-oxoglutarate and the subsequent addition of the resulting succinic semialdehyde-thiamine pyrophosphate anion to isochorismate to yield 2-succinyl-5-enolpyruvyl-6-hydroxy-3-cyclohexene-1-carboxylate (SEPHCHC). The chain is 2-succinyl-5-enolpyruvyl-6-hydroxy-3-cyclohexene-1-carboxylate synthase from Arthrobacter sp. (strain FB24).